Here is a 129-residue protein sequence, read N- to C-terminus: uncharacterized protein (129 aa).

The signal sequence occupies residues 1-21 (MAQNKTIAVALLLATLVAVMG).

This is an uncharacterized protein from Oryza sativa subsp. japonica (Rice).